The chain runs to 387 residues: Methyltransferase phomM (387 aa).

The tract at residues 98 to 223 is methyltransferase domain; the sequence is PHRPKDLHIL…QSVADLFTTL (126 aa).

Belongs to the class I-like SAM-binding methyltransferase superfamily. Erg6/SMT family.

The protein operates within mycotoxin biosynthesis. In terms of biological role, methyltransferase; part of the gene cluster that mediates the biosynthesis of the phomopsins, a group of hexapeptide mycotoxins which infects lupins and causes lupinosis disease in livestock. Within the pathway, phomM acts as an S-adenosylmethionine-dependent alpha-N-methyltransferase that catalyzes two successive N-methylation reactions, converting N-desmethyl-phomopsin A to phomopsin A and phomopsin A further to an N,N-dimethylated congener called phomopsin E. The pathway starts with the processing of the precursor phomA by several endopeptidases including kexin proteases as well as the cluster-specific S41 family peptidase phomP1 and the oligopeptidase phomG to produce 10 identical copies of the hexapeptide Tyr-Val-Ile-Pro-Ile-Asp. After being excised from the precursor peptide, the core peptides are cyclized and modified post-translationally by enzymes encoded within the gene cluster. The timing and order of proteolysis of the phomA precursor and PTMs are still unknown. Two tyrosinase-like enzymes, phomQ1 and phomQ2, catalyze the chlorination and hydroxylation of Tyr, respectively. PhomYb, is proposed to be involved in the construction of the macrocyclic structure. The other 4 ustYa family proteins may be involved in PTMs that generate the unique structure of phomopsin A. PhomYa is required for the hydroxylation of C-beta of Tyr. PhomYc, phomYd, and phomYe are responsible for the biosynthesis of 2,3-dehydroisoleucine (dIle), 2,3-dehydroaspartic acid (dAsp), and 3,4-dehydroproline (dPro), respectively. While dIle formation by phomYc is indispensable for the installation of dAsp by phomYd, the order of the other PTMs have not been elucidated yet. Most of the biosynthetic enzymes likely have broad substrate specificity, and thus, there might be a metabolic grid from a precursor to phomopsin A. The enzyme(s) responsible for the biosynthesis of 3,4-dehydrovaline (dVal) have also not been identified yet. Finally, phomM acts as an S-adenosylmethionine-dependent alpha-N-methyltransferase that catalyzes two successive N-methylation reactions, converting N-desmethyl-phomopsin A to phomopsin A and phomopsin A further to an N,N-dimethylated congener called phomopsin E. The sequence is that of Methyltransferase phomM from Diaporthe leptostromiformis (Lupinosis disease fungus).